The primary structure comprises 212 residues: Probable GTP-binding protein EngB (212 aa).

The EngB-type G domain occupies 38–210; that stretch reads SLPEIAFVGK…KASLAKCIKP (173 aa). GTP contacts are provided by residues 46 to 53, 73 to 77, 91 to 94, 158 to 161, and 189 to 191; these read GKSNVGKS, GRTRQ, DLPG, TKSD, and VSS. Serine 53 and threonine 75 together coordinate Mg(2+).

Belongs to the TRAFAC class TrmE-Era-EngA-EngB-Septin-like GTPase superfamily. EngB GTPase family. It depends on Mg(2+) as a cofactor.

Necessary for normal cell division and for the maintenance of normal septation. The chain is Probable GTP-binding protein EngB from Rickettsia felis (strain ATCC VR-1525 / URRWXCal2) (Rickettsia azadi).